A 102-amino-acid chain; its full sequence is Small ribosomal subunit protein uS10 (102 aa).

This sequence belongs to the universal ribosomal protein uS10 family. Part of the 30S ribosomal subunit.

Involved in the binding of tRNA to the ribosomes. The polypeptide is Small ribosomal subunit protein uS10 (Exiguobacterium sp. (strain ATCC BAA-1283 / AT1b)).